A 304-amino-acid chain; its full sequence is tRNA dimethylallyltransferase (304 aa).

16 to 23 provides a ligand contact to ATP; that stretch reads GPTASGKS. Residue 18-23 coordinates substrate; it reads TASGKS. Interaction with substrate tRNA regions lie at residues 41 to 44 and 165 to 169; these read DSMQ and QRIIR.

The protein belongs to the IPP transferase family. As to quaternary structure, monomer. Mg(2+) is required as a cofactor.

It carries out the reaction adenosine(37) in tRNA + dimethylallyl diphosphate = N(6)-dimethylallyladenosine(37) in tRNA + diphosphate. In terms of biological role, catalyzes the transfer of a dimethylallyl group onto the adenine at position 37 in tRNAs that read codons beginning with uridine, leading to the formation of N6-(dimethylallyl)adenosine (i(6)A). The polypeptide is tRNA dimethylallyltransferase (Allorhizobium ampelinum (strain ATCC BAA-846 / DSM 112012 / S4) (Agrobacterium vitis (strain S4))).